An 86-amino-acid chain; its full sequence is Protein GOLVEN 1 (86 aa).

Residues 1 to 29 (MSCSLRSGLVIVFCFILLLLSSNVGCASA) form the signal peptide. The propeptide occupies 30-70 (ARRLRSHKHHHHKVASLDVFNGGERRRALGGVETGEEVVVM). At tyrosine 72 the chain carries Sulfotyrosine. At proline 80 the chain carries Hydroxyproline. The propeptide occupies 84 to 86 (EKS).

Belongs to the RGF family. In terms of assembly, binds to LRR receptor-like serine/threonine-protein kinases to trigger their dimerization with SERK proteins and subsequent signaling. As to expression, expressed in stems, hypocotyls, cotyledons, leaves, flowers, shoot apex, siliques, stamens and petals.

Its subcellular location is the endoplasmic reticulum. It localises to the secreted. Functionally, signaling peptide (root growth factor) that regulates the pattern of root growth and lateral root development by modulating the length and the number of cortical cells in the root apical meristem (RAM), and the anticlinal asymmetric cell divisions in lateral root initiation cells. Also involved in the regulation of hypocotyl bending and root gravitropism in a PIN2-traffic dependent manner, thus influencing the formation of auxin gradients. Maintains the postembryonic root stem cell niche. The protein is Protein GOLVEN 1 of Arabidopsis thaliana (Mouse-ear cress).